A 270-amino-acid chain; its full sequence is Multi-heme protein MamP (270 aa).

At 1–6 the chain is on the cytoplasmic side; it reads MNSKLV. A transmembrane span lies at residues 7–20; the sequence is LLVVGVVFALVLVI. Residues 21–270 are Lumenal-facing; that stretch reads GRQGGVVAPQ…GPCEACHVIN (250 aa). Residues 84–201 form a PDZ region; the sequence is NLKVFEGHWQ…GGLGFAQLEG (118 aa). The MCR (magnetochrome) 1 motif lies at 205 to 225; sequence ILPGDPRPHGYRGACTDCHPV. 6 residues coordinate heme: Cys219, Cys222, His223, Cys263, Cys266, and His267. An MCR 2 motif is present at residues 245 to 269; it reads ITRDAVTRGVSPHEVRGPCEACHVI.

Belongs to the magnetosome MamP family. As to quaternary structure, homodimer. The cofactor is heme. In terms of processing, subject to proteolytic cleavage which requires both MamE and MamO.

It localises to the cell inner membrane. Functionally, involved in redox-control of magnetite formation. Oxidizes Fe(2+) at alkaline pH; successively forms ferrihydrite (Fe(3+)(2)O(3) 0.5 H(2)O) then magnetite (Fe(3)O(4)) from an Fe(2+) solution. This is Multi-heme protein MamP from Magnetospirillum gryphiswaldense (strain DSM 6361 / JCM 21280 / NBRC 15271 / MSR-1).